The primary structure comprises 120 residues: uncharacterized protein (120 aa).

The next 4 membrane-spanning stretches (helical) occupy residues 9–29 (WPDF…LFCG), 32–52 (ALMF…ADCL), 68–88 (FVWP…VMAT), and 94–114 (GPEH…SFRF).

It localises to the membrane. This is an uncharacterized protein from Escherichia phage Mu (Bacteriophage Mu).